We begin with the raw amino-acid sequence, 159 residues long: Phosphopantetheine adenylyltransferase (159 aa).

Thr-10 contributes to the substrate binding site. ATP is bound by residues 10-11 (TF) and His-18. The substrate site is built by Lys-42, Met-74, and Arg-88. ATP-binding positions include 89 to 91 (GLR), Glu-99, and 124 to 130 (WSFISSS).

Belongs to the bacterial CoaD family. In terms of assembly, homohexamer. Mg(2+) serves as cofactor.

The protein localises to the cytoplasm. It carries out the reaction (R)-4'-phosphopantetheine + ATP + H(+) = 3'-dephospho-CoA + diphosphate. It functions in the pathway cofactor biosynthesis; coenzyme A biosynthesis; CoA from (R)-pantothenate: step 4/5. Functionally, reversibly transfers an adenylyl group from ATP to 4'-phosphopantetheine, yielding dephospho-CoA (dPCoA) and pyrophosphate. The chain is Phosphopantetheine adenylyltransferase from Salmonella dublin (strain CT_02021853).